The sequence spans 327 residues: Endo-1,4-beta-xylanase C (327 aa).

The N-terminal stretch at 1 to 15 (MKFSSLLFTASLVAA) is a signal peptide. Residues 43–325 (TITDPNLLQS…KPAYTAVVNA (283 aa)) form the GH10 domain. Catalysis depends on glutamate 154, which acts as the Proton donor. Glutamate 262 functions as the Nucleophile in the catalytic mechanism. Cysteine 280 and cysteine 286 are disulfide-bonded.

It belongs to the glycosyl hydrolase 10 (cellulase F) family.

The protein localises to the secreted. It catalyses the reaction Endohydrolysis of (1-&gt;4)-beta-D-xylosidic linkages in xylans.. It functions in the pathway glycan degradation; xylan degradation. Weakly inhibited by the wheat xylanase inhibiting protein I (XIP-I). Endo-1,4-beta-xylanase involved in the hydrolysis of xylan, a major structural heterogeneous polysaccharide found in plant biomass representing the second most abundant polysaccharide in the biosphere, after cellulose. Plays an important role in causing fusarium head blight (FHB) on cereal crops. In Gibberella zeae (strain ATCC MYA-4620 / CBS 123657 / FGSC 9075 / NRRL 31084 / PH-1) (Wheat head blight fungus), this protein is Endo-1,4-beta-xylanase C (XYLC).